We begin with the raw amino-acid sequence, 394 residues long: Actin-related protein 2-A (394 aa).

ATP-binding positions include 160–162 (GDG), 214–218 (RMMKE), and 305–310 (GGSTMY).

This sequence belongs to the actin family. ARP2 subfamily. In terms of assembly, component of the Arp2/3 complex composed of actr2/arp2, actr3/arp3, arpc1b, arpc2, arpc3, arpc4 and arpc5.

It localises to the cytoplasm. Its subcellular location is the cytoskeleton. The protein localises to the cell projection. It is found in the nucleus. Functionally, ATP-binding component of the Arp2/3 complex, a multiprotein complex that mediates actin polymerization upon stimulation by nucleation-promoting factor (NPF). The Arp2/3 complex mediates the formation of branched actin networks in the cytoplasm, providing the force for cell motility. Seems to contact the pointed end of the daughter actin filament. In addition to its role in the cytoplasmic cytoskeleton, the Arp2/3 complex also promotes actin polymerization in the nucleus, thereby regulating gene transcription and repair of damaged DNA. The Arp2/3 complex promotes homologous recombination (HR) repair in response to DNA damage by promoting nuclear actin polymerization, leading to drive motility of double-strand breaks (DSBs). The chain is Actin-related protein 2-A (actr2a) from Danio rerio (Zebrafish).